The sequence spans 588 residues: L-fucose isomerase (588 aa).

Catalysis depends on proton acceptor residues E335 and D359. 3 residues coordinate Mn(2+): E335, D359, and H525.

It belongs to the L-fucose isomerase family. Mn(2+) serves as cofactor.

Its subcellular location is the cytoplasm. The catalysed reaction is L-fucose = L-fuculose. It participates in carbohydrate degradation; L-fucose degradation; L-lactaldehyde and glycerone phosphate from L-fucose: step 1/3. In terms of biological role, converts the aldose L-fucose into the corresponding ketose L-fuculose. This chain is L-fucose isomerase, found in Streptococcus pneumoniae (strain Taiwan19F-14).